Reading from the N-terminus, the 312-residue chain is L-lactate dehydrogenase (312 aa).

Residues Val-14, Asp-35, and Tyr-66 each contribute to the NAD(+) site. Positions 83 and 90 each coordinate substrate. NAD(+) is bound by residues Ser-103, 120-122 (ASN), and Ser-145. 122 to 125 (NPVD) is a substrate binding site. 150–153 (DSAR) is a binding site for substrate. Catalysis depends on His-177, which acts as the Proton acceptor. A Phosphotyrosine modification is found at Tyr-220. Thr-229 serves as a coordination point for substrate.

Belongs to the LDH/MDH superfamily. LDH family. As to quaternary structure, homotetramer.

The protein resides in the cytoplasm. It catalyses the reaction (S)-lactate + NAD(+) = pyruvate + NADH + H(+). The protein operates within fermentation; pyruvate fermentation to lactate; (S)-lactate from pyruvate: step 1/1. In terms of biological role, catalyzes the conversion of lactate to pyruvate. The sequence is that of L-lactate dehydrogenase from Mycoplasma genitalium (strain ATCC 33530 / DSM 19775 / NCTC 10195 / G37) (Mycoplasmoides genitalium).